Consider the following 484-residue polypeptide: Chromosomal replication initiator protein DnaA (484 aa).

A domain I, interacts with DnaA modulators region spans residues 1 to 73 (MQEGKNIWSL…EILIEKGHST (73 aa)). The segment at 73–140 (TINVEFIHSQ…EEIHIKYRNP (68 aa)) is domain II. The tract at residues 141-357 (FLKKKYTFEN…AAVTKLKAHI (217 aa)) is domain III, AAA+ region. Gly185, Gly187, Lys188, and Thr189 together coordinate ATP. The segment at 358 to 484 (DLEDIEIDTN…IELMNKINKN (127 aa)) is domain IV, binds dsDNA.

The protein belongs to the DnaA family. Oligomerizes as a right-handed, spiral filament on DNA at oriC.

It localises to the cytoplasm. In terms of biological role, plays an essential role in the initiation and regulation of chromosomal replication. ATP-DnaA binds to the origin of replication (oriC) to initiate formation of the DNA replication initiation complex once per cell cycle. Binds the DnaA box (a 9 base pair repeat at the origin) and separates the double-stranded (ds)DNA. Forms a right-handed helical filament on oriC DNA; dsDNA binds to the exterior of the filament while single-stranded (ss)DNA is stabiized in the filament's interior. The ATP-DnaA-oriC complex binds and stabilizes one strand of the AT-rich DNA unwinding element (DUE), permitting loading of DNA polymerase. After initiation quickly degrades to an ADP-DnaA complex that is not apt for DNA replication. Binds acidic phospholipids. This is Chromosomal replication initiator protein DnaA from Borrelia duttonii (strain Ly).